A 706-amino-acid polypeptide reads, in one-letter code: DNA ligase (706 aa).

The segment at 1–20 (MSATAGTADESGVASAAASA) is disordered. NAD(+) contacts are provided by residues 50 to 54 (DAEYD), 99 to 100 (SL), and E128. Residue K130 is the N6-AMP-lysine intermediate of the active site. NAD(+) is bound by residues R151, E188, K304, and K328. The Zn(2+) site is built by C422, C425, C440, and C446. In terms of domain architecture, BRCT spans 604 to 694 (EGPRPLDGVT…VDAASKLAVP (91 aa)).

Belongs to the NAD-dependent DNA ligase family. LigA subfamily. Requires Mg(2+) as cofactor. The cofactor is Mn(2+).

The enzyme catalyses NAD(+) + (deoxyribonucleotide)n-3'-hydroxyl + 5'-phospho-(deoxyribonucleotide)m = (deoxyribonucleotide)n+m + AMP + beta-nicotinamide D-nucleotide.. Its function is as follows. DNA ligase that catalyzes the formation of phosphodiester linkages between 5'-phosphoryl and 3'-hydroxyl groups in double-stranded DNA using NAD as a coenzyme and as the energy source for the reaction. It is essential for DNA replication and repair of damaged DNA. In Frankia casuarinae (strain DSM 45818 / CECT 9043 / HFP020203 / CcI3), this protein is DNA ligase.